A 148-amino-acid polypeptide reads, in one-letter code: uncharacterized protein (148 aa).

The signal sequence occupies residues 1 to 20 (MNLTKLLPAFAAAVVLSACA).

This is an uncharacterized protein from Haemophilus influenzae (strain ATCC 51907 / DSM 11121 / KW20 / Rd).